We begin with the raw amino-acid sequence, 148 residues long: Lysozyme C (148 aa).

The signal sequence occupies residues 1–18 (MRALIILGLVLLSVTVQG). Residues 19-148 (KIFERCELAR…VSQYVKGCGV (130 aa)) enclose the C-type lysozyme domain. 4 cysteine pairs are disulfide-bonded: cysteine 24–cysteine 146, cysteine 48–cysteine 134, cysteine 83–cysteine 99, and cysteine 95–cysteine 113. Residues glutamate 53 and aspartate 71 contribute to the active site.

Belongs to the glycosyl hydrolase 22 family. Monomer.

It is found in the secreted. The enzyme catalyses Hydrolysis of (1-&gt;4)-beta-linkages between N-acetylmuramic acid and N-acetyl-D-glucosamine residues in a peptidoglycan and between N-acetyl-D-glucosamine residues in chitodextrins.. Its function is as follows. Lysozymes have primarily a bacteriolytic function; those in tissues and body fluids are associated with the monocyte-macrophage system and enhance the activity of immunoagents. Also plays a role in digestion in this species. The polypeptide is Lysozyme C (LYZ) (Trachypithecus francoisi (Francois' leaf monkey)).